Here is a 107-residue protein sequence, read N- to C-terminus: uncharacterized protein (107 aa).

The interval 88–107 is disordered; it reads GSTPWGSGRQVNAARPIGGR.

It is found in the virion. This is an uncharacterized protein from Acanthamoeba polyphaga (Amoeba).